A 272-amino-acid polypeptide reads, in one-letter code: MLEAPPLLLVAGGVGLALLALRWLATTDLQFFGRAFIVWNEFIMKPIRNLLMGSSKEQRILQHVLQHAVAGDPQSVVAAIDSYSLEKEWAMHVGEKKGQIVDRVLREQQPSVLLELGAYCGYSAVRMARLLLPGARLLTIEFNPDYAAITQRMVEFAGLQDKVTVVLGASQDIIPQLKKKYDVDTLDMVFLDHWKDRYLPDMLLLEECGLLREGTVLLADNVIYPGAPDFLEYVRGNSRFECSHFSSYLEYSKVVDGLEKVVYKGLSGPARP.

Topologically, residues methionine 1–proline 6 are cytoplasmic. Residues leucine 7 to threonine 27 form a helical; Signal-anchor for type II membrane protein membrane-spanning segment. Residues aspartate 28–proline 272 lie on the Extracellular side of the membrane. S-adenosyl-L-methionine contacts are provided by residues valine 93, glutamate 115, serine 123, glutamate 141, glycine 168 to glutamine 171, serine 170, and aspartate 192. Mg(2+) is bound at residue aspartate 192. Position 195 (lysine 195) interacts with substrate. Residues aspartate 220 and asparagine 221 each coordinate Mg(2+). 2 residues coordinate substrate: asparagine 221 and glutamate 250. A Phosphoserine modification is found at serine 267.

The protein belongs to the class I-like SAM-binding methyltransferase superfamily. Cation-dependent O-methyltransferase family. It depends on Mg(2+) as a cofactor.

It is found in the cytoplasm. Its subcellular location is the cell membrane. The catalysed reaction is a catechol + S-adenosyl-L-methionine = a guaiacol + S-adenosyl-L-homocysteine + H(+). It catalyses the reaction 2-hydroxyestrone + S-adenosyl-L-methionine = 2-hydroxy-3-methoxy-estrone + S-adenosyl-L-homocysteine + H(+). It carries out the reaction 4-hydroxyestrone + S-adenosyl-L-methionine = 4-methoxyestrone + S-adenosyl-L-homocysteine + H(+). The enzyme catalyses 2-hydroxyestrone + S-adenosyl-L-methionine = 2-methoxyestrone + S-adenosyl-L-homocysteine + H(+). The catalysed reaction is 4-hydroxy-17beta-estradiol + S-adenosyl-L-methionine = 4-methoxy-17beta-estradiol + S-adenosyl-L-homocysteine + H(+). It catalyses the reaction 2-hydroxy-17beta-estradiol + S-adenosyl-L-methionine = 2-hydroxy-3-methoxy-17beta-estradiol + S-adenosyl-L-homocysteine + H(+). It carries out the reaction 2-hydroxy-17beta-estradiol + S-adenosyl-L-methionine = 2-methoxy-17beta-estradiol + S-adenosyl-L-homocysteine + H(+). Its function is as follows. Catalyzes the O-methylation, and thereby the inactivation, of catecholamine neurotransmitters and catechol hormones. Also shortens the biological half-lives of certain neuroactive drugs, like L-DOPA, alpha-methyl DOPA and isoproterenol. This chain is Catechol O-methyltransferase (COMT), found in Bos taurus (Bovine).